The following is a 323-amino-acid chain: E3 ubiquitin-protein ligase makorin (323 aa).

C3H1-type zinc fingers lie at residues 1 to 28 and 29 to 56; these read MSDR…HDSK and DPPN…HVRA. Residues 62–74 are compositionally biased toward low complexity; it reads LSSDSESLDRSIS. The interval 62-92 is disordered; it reads LSSDSESLDRSISTTPSRHLQQQGDNNDGDK. A compositionally biased stretch (polar residues) spans 75 to 87; sequence TTPSRHLQQQGDN. Residues 101-128 form a C3H1-type 3 zinc finger; it reads PREYPICSFAAAGDCPRGNQCPHMHGDL. Positions 129-158 are makorin-type Cys-His; it reads CNTCGKKCLHPFRPEEREEHTKECEKKQKH. The RING-type zinc finger occupies 170-228; it reads CSVCLDRILSKATPGERKFGLLTECDHPFCIQCIRNWRSSAPVSGMDVNSTLRACPICR. A C3H1-type 4 zinc finger spans residues 257 to 286; that stretch reads KLRSIDCKHFNFGNGNCPFGASCFYKHAYS.

It carries out the reaction S-ubiquitinyl-[E2 ubiquitin-conjugating enzyme]-L-cysteine + [acceptor protein]-L-lysine = [E2 ubiquitin-conjugating enzyme]-L-cysteine + N(6)-ubiquitinyl-[acceptor protein]-L-lysine.. The protein operates within protein modification; protein ubiquitination. E3 ubiquitin ligase catalyzing the covalent attachment of ubiquitin moieties onto substrate proteins. The polypeptide is E3 ubiquitin-protein ligase makorin (MKRN) (Arabidopsis thaliana (Mouse-ear cress)).